We begin with the raw amino-acid sequence, 263 residues long: Acyl-[acyl-carrier-protein]--UDP-N-acetylglucosamine O-acyltransferase (263 aa).

Belongs to the transferase hexapeptide repeat family. LpxA subfamily. Homotrimer.

Its subcellular location is the cytoplasm. It carries out the reaction a (3R)-hydroxyacyl-[ACP] + UDP-N-acetyl-alpha-D-glucosamine = a UDP-3-O-[(3R)-3-hydroxyacyl]-N-acetyl-alpha-D-glucosamine + holo-[ACP]. Its pathway is glycolipid biosynthesis; lipid IV(A) biosynthesis; lipid IV(A) from (3R)-3-hydroxytetradecanoyl-[acyl-carrier-protein] and UDP-N-acetyl-alpha-D-glucosamine: step 1/6. Involved in the biosynthesis of lipid A, a phosphorylated glycolipid that anchors the lipopolysaccharide to the outer membrane of the cell. The protein is Acyl-[acyl-carrier-protein]--UDP-N-acetylglucosamine O-acyltransferase of Xylella fastidiosa (strain Temecula1 / ATCC 700964).